We begin with the raw amino-acid sequence, 428 residues long: Histidine--tRNA ligase (428 aa).

It belongs to the class-II aminoacyl-tRNA synthetase family. As to quaternary structure, homodimer.

The protein localises to the cytoplasm. It carries out the reaction tRNA(His) + L-histidine + ATP = L-histidyl-tRNA(His) + AMP + diphosphate + H(+). This chain is Histidine--tRNA ligase, found in Chromohalobacter salexigens (strain ATCC BAA-138 / DSM 3043 / CIP 106854 / NCIMB 13768 / 1H11).